Reading from the N-terminus, the 442-residue chain is QWRF motif-containing protein 6 (442 aa).

Disordered regions lie at residues 1–144 (MEAK…LSQQ) and 221–240 (FSRL…ADTK). Basic residues predominate over residues 57 to 66 (KQHHLQHHQI). Residues 80 to 89 (KMADGDENRS) are compositionally biased toward basic and acidic residues. The short motif at 264-267 (QWRF) is the QWRF motif element.

This sequence belongs to the QWRF family.

The protein is QWRF motif-containing protein 6 (QWRF6) of Arabidopsis thaliana (Mouse-ear cress).